Reading from the N-terminus, the 1207-residue chain is Chromosomal serine/threonine-protein kinase JIL-1 (1207 aa).

The segment covering 1–19 (MSRLQKQNYEILSGTSTSR) has biased composition (polar residues). 3 disordered regions span residues 1–119 (MSRL…ASAR), 164–183 (QDME…SSSL), and 210–230 (SSST…LDLD). Ser-29 and Ser-31 each carry phosphoserine. Residues 45-69 (LNGQLVANGNGKTRKNSNSETMTNG) are compositionally biased toward polar residues. The span at 88–97 (NYNNNNNNNN) shows a compositional bias: low complexity. Polar residues predominate over residues 98–108 (SISATNGQYTN). The segment covering 109–118 (SSSKTTSASA) has biased composition (low complexity). Over residues 164–178 (QDMEEDEPNGIEIDE) the composition is skewed to acidic residues. Residues 213-226 (TTPSYAMPTSNSTP) show a composition bias toward polar residues. The 270-residue stretch at 261 to 530 (FKIIRVLGTG…ASEIKEHPFF (270 aa)) folds into the Protein kinase 1 domain. Residues 267–275 (LGTGAYGRV) and Lys-293 each bind ATP. The active-site Proton acceptor is the Asp-389. Phosphoserine is present on Ser-424. The region spanning 531–599 (NGINWQELRT…VAPEHLEQMR (69 aa)) is the AGC-kinase C-terminal domain. Thr-588 carries the phosphothreonine modification. The Protein kinase 2 domain maps to 623–886 (LELGTRTSNG…LSDILDSEWL (264 aa)). ATP contacts are provided by residues 629 to 637 (TSNGAYGTC) and Lys-652. Asp-739 serves as the catalytic Proton acceptor. Thr-1045 is modified (phosphothreonine). Ser-1047 carries the post-translational modification Phosphoserine. The disordered stretch occupies residues 1168–1197 (TFPRPKAQLKRTKREPKVPRPPTRVQPERA).

It belongs to the protein kinase superfamily. Ser/Thr protein kinase family. Interacts with lola. Interacts with proteins of the male specific lethal (MSL) dosage compensation complex; this interaction is mediated by the kinase domains. It depends on Mg(2+) as a cofactor. Autophosphorylated in vitro.

The protein localises to the nucleus. Its subcellular location is the chromosome. It catalyses the reaction L-seryl-[protein] + ATP = O-phospho-L-seryl-[protein] + ADP + H(+). The catalysed reaction is L-threonyl-[protein] + ATP = O-phospho-L-threonyl-[protein] + ADP + H(+). Its function is as follows. Phosphorylates 'Ser-10' of histone H3. May regulate gene expression by establishing or maintaining the structure of more open chromatin regions. Also required for normal polytene chromosome structure, for oogenesis and for viability throughout development. Regulates the structure of polytene chromosomes in salivary glands. May phosphorylate 'Ser-1' of histone H2A. In Drosophila melanogaster (Fruit fly), this protein is Chromosomal serine/threonine-protein kinase JIL-1.